Reading from the N-terminus, the 311-residue chain is Oxygen-dependent coproporphyrinogen-III oxidase (311 aa).

Position 100 (serine 100) interacts with substrate. Positions 104 and 114 each coordinate a divalent metal cation. The Proton donor role is filled by histidine 114. Residue asparagine 116–arginine 118 participates in substrate binding. The a divalent metal cation site is built by histidine 153 and histidine 183. The interval tyrosine 248–glutamate 283 is important for dimerization. Position 266 to 268 (glycine 266 to arginine 268) interacts with substrate.

Belongs to the aerobic coproporphyrinogen-III oxidase family. Homodimer. It depends on a divalent metal cation as a cofactor.

It is found in the cytoplasm. It carries out the reaction coproporphyrinogen III + O2 + 2 H(+) = protoporphyrinogen IX + 2 CO2 + 2 H2O. Its pathway is porphyrin-containing compound metabolism; protoporphyrin-IX biosynthesis; protoporphyrinogen-IX from coproporphyrinogen-III (O2 route): step 1/1. Its function is as follows. Involved in the heme biosynthesis. Catalyzes the aerobic oxidative decarboxylation of propionate groups of rings A and B of coproporphyrinogen-III to yield the vinyl groups in protoporphyrinogen-IX. This Legionella pneumophila (strain Corby) protein is Oxygen-dependent coproporphyrinogen-III oxidase.